The primary structure comprises 609 residues: Pentatricopeptide repeat-containing protein At5g13770, chloroplastic (609 aa).

The transit peptide at 1 to 44 (MAIASGSWVATVNHHANPHSFTSPTKPIFFLSQKPHNFHVCSSR) directs the protein to the chloroplast. 13 PPR repeats span residues 103-137 (ELRT…KALP), 138-168 (DGQT…FRSD), 172-207 (AVSA…GVEP), 208-242 (SPGC…RLSF), 247-281 (SGSI…GIPE), 282-316 (SSEL…KLLK), 317-351 (DPEM…ELKV), 352-386 (TDCI…ECEA), 387-421 (GQVT…GFDK), 422-456 (CVVA…GCKP), 457-491 (NIWI…KVLP), 492-526 (DKVS…RGKI), and 527-561 (DRAM…GTRL).

This sequence belongs to the PPR family. P subfamily.

It localises to the plastid. The protein resides in the chloroplast. This Arabidopsis thaliana (Mouse-ear cress) protein is Pentatricopeptide repeat-containing protein At5g13770, chloroplastic.